Reading from the N-terminus, the 201-residue chain is Recombination protein RecR (201 aa).

Residues C58–C73 form a C4-type zinc finger. Residues E81–P178 enclose the Toprim domain.

The protein belongs to the RecR family.

Its function is as follows. May play a role in DNA repair. It seems to be involved in an RecBC-independent recombinational process of DNA repair. It may act with RecF and RecO. This Nitratidesulfovibrio vulgaris (strain DSM 19637 / Miyazaki F) (Desulfovibrio vulgaris) protein is Recombination protein RecR.